An 82-amino-acid polypeptide reads, in one-letter code: Conotoxin C11GB (82 aa).

Residues 1-22 (MKLTCVMIVAVLFLTAWTVVTA) form the signal peptide. Residues 23 to 53 (EPHSSNVLENLYLKAHHEMENPEASKLNTRD) constitute a propeptide that is removed on maturation. 3 cysteine pairs are disulfide-bonded: Cys55-Cys72, Cys62-Cys76, and Cys71-Cys80.

The protein belongs to the conotoxin O1 superfamily. Expressed by the venom duct.

It localises to the secreted. In Conus vexillum (Flag cone), this protein is Conotoxin C11GB.